The following is a 92-amino-acid chain: Small ribosomal subunit protein bS18 (92 aa).

Belongs to the bacterial ribosomal protein bS18 family. As to quaternary structure, part of the 30S ribosomal subunit. Forms a tight heterodimer with protein bS6.

Its function is as follows. Binds as a heterodimer with protein bS6 to the central domain of the 16S rRNA, where it helps stabilize the platform of the 30S subunit. This chain is Small ribosomal subunit protein bS18, found in Chlorobium chlorochromatii (strain CaD3).